A 213-amino-acid polypeptide reads, in one-letter code: Kynurenine formamidase (213 aa).

Trp18 contributes to the substrate binding site. Zn(2+) contacts are provided by His48, His52, and Asp54. His58 serves as the catalytic Proton donor/acceptor. Zn(2+) is bound by residues His160 and Glu172.

It belongs to the Cyclase 1 superfamily. KynB family. As to quaternary structure, homodimer. Zn(2+) is required as a cofactor.

The enzyme catalyses N-formyl-L-kynurenine + H2O = L-kynurenine + formate + H(+). It functions in the pathway amino-acid degradation; L-tryptophan degradation via kynurenine pathway; L-kynurenine from L-tryptophan: step 2/2. Its function is as follows. Catalyzes the hydrolysis of N-formyl-L-kynurenine to L-kynurenine, the second step in the kynurenine pathway of tryptophan degradation. The sequence is that of Kynurenine formamidase from Burkholderia multivorans (strain ATCC 17616 / 249).